The following is a 1350-amino-acid chain: MASTADFLLDDQTDEDFFDKLVDDSYTPTASSSAKELKFDDGSDSDDAKAFANLSVVDDVLGDGDVALNEAGLGNDVANEGTSGSVGKEEPSSSIAPEAVQFVNSDANRLRDVDVVRSEVDDMALTETGKESNIVDGSGSPGVKEVDWGSFYADSSVNDGGGFGSYSDFFTELDATAGNVQGQAEVAVATGGNLVANDTINTSVGLDNSAGFEQHQGQVQHDSGSGQYVDNSQSWENLYPGWKYDASTGQWYQVDGQDATVNSQESYINSTGNWESVAADNSDVAYLKQSTTSAMAGTAESVSTWNQVSQVGNGYPEHMVFDAQYPGWYYDTIAQEWRSLDSYNQASQTTVTGQAHDQQVQNGHARTTTYHNNSQSSVYDVNNKNQTFKAQDFAIQGQHGSWDESYYANNQQAGNTWQPVNVGKAEPAVTSDSLSRFGGNQQVNNLYSTESVAEQFKPNTIGAQSFIPQHMNVASATQNGPLSFSNDLYNRQQSVDHAQKSFQNNQLFSPSVGRSSDRRPPHALVSFGFGGKLIVMKDNNGSLQNTSFGSQGIGGSSITVLNLAEVISGSASYSSPGEDSLSYFRCLHQQSLPGPLVGGNVGSKELHKWIDERLLHCESSNMDFSRGKLLKMLLSLLRISCQYYGKLRSPFGSDASQKETDTPEAAVAKLFAFAKKDGIQNGYAPISQCLQHLPPESQMQVTASEVQNLLASGRKMEALQCAQEGHLWGPALVIAAQLGDQFYVDTVKQMALRQLIPGSPLRTLCLLVAGQPAEVCPTGSSSSMLDNWEENLGIITANRTTDDDLVIIHLGDSMWKERGEIIAAHICYLIADKNFDPYSESARLCLVGADHWKCPRTYASPDAIQRTELYEYSKTLGNSQYILLPFQPYKIIYAHMLAEVGKLSTAQKYCQAVIRCLKTSRSSEVEMWKQFASSLEERIRSHQEGGNLAPAKLVGKLLNSLWGMPPPAPHSTTGNPQVNEYQHQQQEAAKLSYSQSANTMSSLMPPASIEPVHEWGGNGRTMAAHSRSVSEPDFSRTPIQDQTDSSKDKAPDGVTQVKSTRKVPSSRFSRFGIGILKNTVGKVFPSRSSNEAKLGNENQFYYDDNLKRWVERGVEPPAEEAALPPPPTSVPFRSNSLGHENKSEIKNEMSPSSGSWSSGSPTPSENSPGIPPVSQGSNQFSARGRMGVRARYVDTYNQGSSSMYQSPPVQSSKPPIPAKAKFFVPAAPASFANDQVMESVSAETRQENSGDEAVVGSAGAPGPSQASFQSPTPSPIAMQRFPSVDNIRRSGSGTSLNGDLPQSVSRRTASWSGSVNSSSFMSPTSASTFRPSPLNSSSSSLGEELQEVEL.

Disordered stretches follow at residues 26–45, 73–97, 964–1063, 1118–1216, and 1235–1350; these read YTPT…GSDS, LGND…SIAP, MPPP…TRKV, AEEA…KPPI, and QVME…EVEL. A compositionally biased stretch (basic and acidic residues) spans 35–45; that stretch reads KELKFDDGSDS. The residue at position 43 (Ser43) is a Phosphoserine. The segment covering 970–1002 has biased composition (polar residues); that stretch reads HSTTGNPQVNEYQHQQQEAAKLSYSQSANTMSS. Over residues 1150–1168 the composition is skewed to low complexity; the sequence is SPSSGSWSSGSPTPSENSP. 2 stretches are compositionally biased toward polar residues: residues 1195 to 1210 and 1289 to 1316; these read TYNQ…PPVQ and RSGS…GSVN. Over residues 1317–1343 the composition is skewed to low complexity; it reads SSSFMSPTSASTFRPSPLNSSSSSLGE.

This sequence belongs to the SEC16 family. In terms of assembly, interacts with SEC13A, SEC13B and SEC31A.

It is found in the golgi apparatus. Its subcellular location is the golgi stack. The protein resides in the endoplasmic reticulum. In terms of biological role, required for efficient protein export from the endoplasmic reticulum (ER) to the Golgi by regulating COPII coat dynamics at the ER. Functions as a scaffold and regulator of COPII coat assembly at ER exit sites. In Arabidopsis thaliana (Mouse-ear cress), this protein is Protein transport protein SEC16A homolog.